A 144-amino-acid polypeptide reads, in one-letter code: Large ribosomal subunit protein uL22 (144 aa).

Residues 124-137 are compositionally biased toward basic residues; that stretch reads RLKKRVLGQNKRKQ. Positions 124–144 are disordered; the sequence is RLKKRVLGQNKRKQSVSGEKK.

It belongs to the universal ribosomal protein uL22 family. Part of the 50S ribosomal subunit.

In terms of biological role, this protein binds specifically to 23S rRNA; its binding is stimulated by other ribosomal proteins, e.g. L4, L17, and L20. It is important during the early stages of 50S assembly. It makes multiple contacts with different domains of the 23S rRNA in the assembled 50S subunit and ribosome. The globular domain of the protein is located near the polypeptide exit tunnel on the outside of the subunit, while an extended beta-hairpin is found that lines the wall of the exit tunnel in the center of the 70S ribosome. This Mycoplasmoides gallisepticum (strain R(low / passage 15 / clone 2)) (Mycoplasma gallisepticum) protein is Large ribosomal subunit protein uL22.